The chain runs to 1154 residues: FERM domain-containing protein A (1154 aa).

Disordered stretches follow at residues 122–149 (NNNSSIITTTTTTTNNNNNSNCGSSSSS), 432–468 (NLSSSGGSGNGSGSGNGSSSSSSNSSSGNNNNHNHHN), 715–734 (NKNNNNNNNSNNSSTSSSSS), 771–794 (SNSNSNILNNSNDEQSTSTSTSSS), and 961–980 (TNGSSSSSSNNNGGNSNNGI). 2 consecutive FERM domains span residues 218-547 (PLHQ…PSIQ) and 666-1103 (REIV…QTKL). Gly residues predominate over residues 437–447 (GGSGNGSGSGN). The segment covering 448-463 (GSSSSSSNSSSGNNNN) has biased composition (low complexity).

Functionally, key regulator of adhesion dynamics, it acts as an anti-adhesive. Plays a critical role in the regulation of cell-cell adhesion, multi-cellular development and, in particular, the formation of the organising center known as the tip. Required for turnover of paxillin-adhesion sites during cell migration. Plays a major role in normal cell shape, cell-substrate adhesion and actin cytoskeleton organization. This is FERM domain-containing protein A (frmA) from Dictyostelium discoideum (Social amoeba).